The following is a 337-amino-acid chain: Retrovirus-related Pol polyprotein from type-1 retrotransposable element R1 (337 aa).

The region spanning G1 to M118 is the Reverse transcriptase domain. The interval K253–D337 is nucleic acid-binding endonuclease.

It catalyses the reaction DNA(n) + a 2'-deoxyribonucleoside 5'-triphosphate = DNA(n+1) + diphosphate. In Nasonia vitripennis (Parasitic wasp), this protein is Retrovirus-related Pol polyprotein from type-1 retrotransposable element R1.